The following is a 231-amino-acid chain: 5'-methylthioadenosine/S-adenosylhomocysteine nucleosidase (231 aa).

The active-site Proton acceptor is E12. Residues G78, V153, and 174–175 each bind substrate; that span reads ME. D198 functions as the Proton donor in the catalytic mechanism.

The protein belongs to the PNP/UDP phosphorylase family. MtnN subfamily.

It catalyses the reaction S-adenosyl-L-homocysteine + H2O = S-(5-deoxy-D-ribos-5-yl)-L-homocysteine + adenine. The catalysed reaction is S-methyl-5'-thioadenosine + H2O = 5-(methylsulfanyl)-D-ribose + adenine. The enzyme catalyses 5'-deoxyadenosine + H2O = 5-deoxy-D-ribose + adenine. Its pathway is amino-acid biosynthesis; L-methionine biosynthesis via salvage pathway; S-methyl-5-thio-alpha-D-ribose 1-phosphate from S-methyl-5'-thioadenosine (hydrolase route): step 1/2. Functionally, catalyzes the irreversible cleavage of the glycosidic bond in both 5'-methylthioadenosine (MTA) and S-adenosylhomocysteine (SAH/AdoHcy) to adenine and the corresponding thioribose, 5'-methylthioribose and S-ribosylhomocysteine, respectively. Also cleaves 5'-deoxyadenosine, a toxic by-product of radical S-adenosylmethionine (SAM) enzymes, into 5-deoxyribose and adenine. This Aliivibrio fischeri (Vibrio fischeri) protein is 5'-methylthioadenosine/S-adenosylhomocysteine nucleosidase.